The primary structure comprises 500 residues: Na(+)/H(+) antiporter NhaB (500 aa).

11 consecutive transmembrane segments (helical) span residues 23–43, 53–73, 96–116, 129–149, 150–170, 205–225, 238–258, 311–331, 350–370, 450–470, and 477–497; these read VVIC…GPVA, IFTL…LLLI, VILL…LLLF, AILA…LDAL, TVTA…HRVA, LLMH…VGEP, FVDF…AGLV, ILII…LMVI, FQDA…VAVI, ATPN…APLI, and MVWM…WAVT.

Belongs to the NhaB Na(+)/H(+) (TC 2.A.34) antiporter family.

The protein localises to the cell inner membrane. The catalysed reaction is 2 Na(+)(in) + 3 H(+)(out) = 2 Na(+)(out) + 3 H(+)(in). Its function is as follows. Na(+)/H(+) antiporter that extrudes sodium in exchange for external protons. This chain is Na(+)/H(+) antiporter NhaB, found in Pseudomonas putida (strain ATCC 47054 / DSM 6125 / CFBP 8728 / NCIMB 11950 / KT2440).